The chain runs to 312 residues: HPr kinase/phosphorylase (312 aa).

Residues His139 and Lys160 contribute to the active site. ATP is bound at residue 154–161 (GSSGVGKS). Mg(2+) is bound at residue Ser161. Asp178 (proton acceptor; for phosphorylation activity. Proton donor; for dephosphorylation activity) is an active-site residue. Positions 202–211 (LEIRGLGIIN) are important for the catalytic mechanism of both phosphorylation and dephosphorylation. Residue Glu203 coordinates Mg(2+). Arg244 is a catalytic residue. The tract at residues 265-270 (PVRPGR) is important for the catalytic mechanism of dephosphorylation.

Belongs to the HPrK/P family. As to quaternary structure, homohexamer. Requires Mg(2+) as cofactor.

It catalyses the reaction [HPr protein]-L-serine + ATP = [HPr protein]-O-phospho-L-serine + ADP + H(+). The catalysed reaction is [HPr protein]-O-phospho-L-serine + phosphate + H(+) = [HPr protein]-L-serine + diphosphate. In terms of biological role, catalyzes the ATP- as well as the pyrophosphate-dependent phosphorylation of a specific serine residue in HPr, a phosphocarrier protein of the phosphoenolpyruvate-dependent sugar phosphotransferase system (PTS). HprK/P also catalyzes the pyrophosphate-producing, inorganic phosphate-dependent dephosphorylation (phosphorolysis) of seryl-phosphorylated HPr (P-Ser-HPr). The two antagonistic activities of HprK/P are regulated by several intracellular metabolites, which change their concentration in response to the absence or presence of rapidly metabolisable carbon sources (glucose, fructose, etc.) in the growth medium. Therefore, by controlling the phosphorylation state of HPr, HPrK/P is a sensor enzyme that plays a major role in the regulation of carbon metabolism and sugar transport: it mediates carbon catabolite repression (CCR), and regulates PTS-catalyzed carbohydrate uptake and inducer exclusion. This chain is HPr kinase/phosphorylase, found in Listeria monocytogenes serotype 4b (strain CLIP80459).